The primary structure comprises 227 residues: Nitrobenzene nitroreductase (227 aa).

FMN is bound at residue 14–18 (RRAKR). NADP(+) is bound by residues serine 44 and isoleucine 109. FMN-binding positions include 172–173 (VF) and lysine 215.

The protein belongs to the nitroreductase family. Monomer. The cofactor is FMN.

The catalysed reaction is N-phenylhydroxylamine + 2 NADP(+) + H2O = nitrobenzene + 2 NADPH + 2 H(+). It participates in xenobiotic degradation; nitrobenzene degradation. Its activity is regulated as follows. Inhibited by dicumarol, p-hydroxymercuribenzoate and salicyl hydroxamate. Involved in the biodegradation of nitroaromatic compounds. Catalyzes the two-electron reduction of nitrobenzene (NB) to produce a nitrosobenzene (NOB) intermediate, which is immediately reduced to hydroxylaminobenzene (HAB) by a second two-electron transfer. Also active on menadione and nitrofurazone. Replacing NADPH with NADH results in a 4-fold decrease in the reaction rate. This is Nitrobenzene nitroreductase from Ectopseudomonas oleovorans (Pseudomonas oleovorans).